A 352-amino-acid chain; its full sequence is RAD51-associated protein 1 (352 aa).

Residues 1–10 (MVRPVRHKKP) are compositionally biased toward basic residues. 2 disordered regions span residues 1-78 (MVRP…TFSI) and 115-144 (TNVQNSQDKSIEKHGSSKIETMNKSPHISN). Phosphoserine occurs at positions 19 and 21. The segment at 30–49 (VPLNKKSRTAPKELKQDKPK) is interaction with DNA. The span at 39-72 (APKELKQDKPKPNLNNLRKEEIPVQEKTPKKRLP) shows a compositional bias: basic and acidic residues. Position 66 is a phosphothreonine (Thr-66). Ser-120 and Ser-124 each carry phosphoserine. A compositionally biased stretch (polar residues) spans 132 to 144 (KIETMNKSPHISN). Residues 154–159 (LDKITV) carry the SIM motif motif. The disordered stretch occupies residues 162–323 (DVGGVQGKRK…RSSSSPLVVV (162 aa)). Over residues 188–221 (SDGDSANDTEPDFAPGEDSEDDSDFCESEDNDED) the composition is skewed to acidic residues. Basic and acidic residues predominate over residues 229–247 (VKEIKKKEVKVKSPVEKKE). An interaction with DNA region spans residues 243 to 304 (VEKKEKKSKS…PSAESKKPKW (62 aa)). Lys-251 is covalently cross-linked (Glycyl lysine isopeptide (Lys-Gly) (interchain with G-Cter in ubiquitin; alternate)). Lys-269 is covalently cross-linked (Glycyl lysine isopeptide (Lys-Gly) (interchain with G-Cter in SUMO)). A compositionally biased stretch (polar residues) spans 270 to 284 (SESQSLPKKVSLSSD). Phosphoserine is present on Ser-280. The WVPP motif motif lies at 304–307 (WVPP). The span at 306-323 (PPAASGGSRSSSSPLVVV) shows a compositional bias: low complexity. An interaction with RAD51 region spans residues 313–352 (SRSSSSPLVVVSVKSPNQSLRLGLSRLARVKPLHPNATST). Position 327 is a phosphoserine (Ser-327).

As to quaternary structure, monomer; elongated monodisperse monomer. Interacts (via C-terminal region) with RAD51; the interaction is direct. Interacts (via SIM motif) with WDR48/UAF1; WDR48/UAF1 and RAD51AP1 cooperate together to stimulate RAD51-mediated homologous recombination (HR). Interacts (via WVPP motif) with DMC1; the interaction is direct. Interacts with PALB2. Interacts with RAD52. In terms of assembly, does not interact with DMC1; lack of interaction is caused by the absence of the WVPP motif in this isoform. In terms of processing, sumoylation with SUMO2/3 by NSMCE2/MMS21 promotes stabilization, possibly by preventing ubiquitination. Sumoylation is required for alternative lengthening of telomeres (ALT) pathway. As to expression, highly expressed in testis and thymus. Lower levels in colon and small intestine. Little or no expression in spleen, prostate, ovary and peripheral blood leukocytes.

Its subcellular location is the chromosome. The protein localises to the nucleus. The protein resides in the telomere. Its function is as follows. Structure-specific DNA-binding protein involved in DNA repair by promoting RAD51-mediated homologous recombination. Acts by stimulating D-Loop formation by RAD51: specifically enhances joint molecule formation through its structure-specific DNA interaction and its interaction with RAD51. Binds single-stranded DNA (ssDNA), double-stranded DNA (dsDNA) and secondary DNA structures, such as D-loop structures: has a strong preference for branched-DNA structures that are obligatory intermediates during joint molecule formation. Cooperates with WDR48/UAF1 to stimulate RAD51-mediated homologous recombination: both WDR48/UAF1 and RAD51AP1 have coordinated role in DNA-binding during homologous recombination and DNA repair. WDR48/UAF1 and RAD51AP1 also have a coordinated role in DNA-binding to promote USP1-mediated deubiquitination of FANCD2. Also involved in meiosis by promoting DMC1-mediated homologous meiotic recombination. Key mediator of alternative lengthening of telomeres (ALT) pathway, a homology-directed repair mechanism of telomere elongation that controls proliferation in aggressive cancers, by stimulating homologous recombination. May also bind RNA; additional evidences are however required to confirm RNA-binding in vivo. The chain is RAD51-associated protein 1 from Homo sapiens (Human).